The chain runs to 700 residues: MSLGDSDRERVVAALGRDPTPAEAALFENLWSEHCAYRSSRSLLSAFDSDSEAVVVGPGDDAAVVRVPGTDQLVTVGVESHNHPSYVDPYDGAATGVGGIVRDTLSMGAYPIALADALYFGDFDDEHARYLLDGVVEGISDYGNAIGVPTVAGATQFHDGYTGNPLVNVACVGLVTEDRLVTAAAKSPGNKLVLVGNATGRDGLGGASFASEDLAEDAETADRPAVQVGDPYTEKLLIEANETLLDRDLVVAARDLGAAGLGGASSEMVAQGELGARITLDAVHQREPEMNAMEILLAESQERMCYEVAPADVDAVREVATRYDLGCSVIGEVTTGNYVCEFDGETVVDAPATVLADGAPATDQPSTVPQAPATDRPDPALGTAIDAVLSAPNTASNEWVYRQYDHEVGARTVQRPGEDAAGLALHEADDGTTVALSAGANPGWTACQPYAGAYATAVENATNLAAAGAEPLAAVDCLNGGNPEDPDVYGGFEAMVAGLADGCRAIDTPVVGGNVSLYNDSATGPIAPTPTLAVVGYRDQHPVPGSGLAGDGDLVLVGGHADGLGGSVYLQALGGTDQFPAADAAGVDAVREAATRADTLAVHDISDGGLAVTLAEMVTADAGATVTVPGLAALFSECPGRAVVETRDADALQAALDVPVVRLGSATTDGTLSVTVDDETVTRDAATIRDHRGVIARELD.

Residue histidine 34 is part of the active site. Residue tyrosine 37 participates in ATP binding. Glutamate 79 lines the Mg(2+) pocket. Substrate-binding positions include 80–83 (SHNH) and arginine 102. Histidine 81 functions as the Proton acceptor in the catalytic mechanism. Aspartate 103 contacts Mg(2+). Glutamine 227 is a substrate binding site. Position 255 (aspartate 255) interacts with Mg(2+). 299-301 (ESQ) provides a ligand contact to substrate. ATP contacts are provided by aspartate 476 and glycine 513. A Mg(2+)-binding site is contributed by asparagine 514. Residue serine 516 participates in substrate binding.

Belongs to the FGAMS family. As to quaternary structure, monomer. Part of the FGAM synthase complex composed of 1 PurL, 1 PurQ and 2 PurS subunits.

It is found in the cytoplasm. It catalyses the reaction N(2)-formyl-N(1)-(5-phospho-beta-D-ribosyl)glycinamide + L-glutamine + ATP + H2O = 2-formamido-N(1)-(5-O-phospho-beta-D-ribosyl)acetamidine + L-glutamate + ADP + phosphate + H(+). It participates in purine metabolism; IMP biosynthesis via de novo pathway; 5-amino-1-(5-phospho-D-ribosyl)imidazole from N(2)-formyl-N(1)-(5-phospho-D-ribosyl)glycinamide: step 1/2. Functionally, part of the phosphoribosylformylglycinamidine synthase complex involved in the purines biosynthetic pathway. Catalyzes the ATP-dependent conversion of formylglycinamide ribonucleotide (FGAR) and glutamine to yield formylglycinamidine ribonucleotide (FGAM) and glutamate. The FGAM synthase complex is composed of three subunits. PurQ produces an ammonia molecule by converting glutamine to glutamate. PurL transfers the ammonia molecule to FGAR to form FGAM in an ATP-dependent manner. PurS interacts with PurQ and PurL and is thought to assist in the transfer of the ammonia molecule from PurQ to PurL. The sequence is that of Phosphoribosylformylglycinamidine synthase subunit PurL from Halobacterium salinarum (strain ATCC 29341 / DSM 671 / R1).